A 339-amino-acid polypeptide reads, in one-letter code: 4-dimethylallyltryptophan N-methyltransferase easF (339 aa).

It belongs to the methyltransferase superfamily. As to quaternary structure, homodimer.

It catalyses the reaction 4-(3-methylbut-2-enyl)-L-tryptophan + S-adenosyl-L-methionine = 4-(3-methylbut-2-enyl)-L-abrine + S-adenosyl-L-homocysteine + H(+). Its pathway is alkaloid biosynthesis; ergot alkaloid biosynthesis. 4-dimethylallyltryptophan N-methyltransferase; part of the gene cluster that mediates the biosynthesis of fumiclavanine C, a fungal ergot alkaloid. DmaW catalyzes the first step of ergot alkaloid biosynthesis by condensing dimethylallyl diphosphate (DMAP) and tryptophan to form 4-dimethylallyl-L-tryptophan. The second step is catalyzed by the methyltransferase easF that methylates 4-dimethylallyl-L-tryptophan in the presence of S-adenosyl-L-methionine, resulting in the formation of 4-dimethylallyl-L-abrine. The catalase easC and the FAD-dependent oxidoreductase easE then transform 4-dimethylallyl-L-abrine to chanoclavine-I which is further oxidized by EasD in the presence of NAD(+), resulting in the formation of chanoclavine-I aldehyde. EasA reduces chanoclavine-I aldehyde to dihydrochanoclavine-I aldehyde that spontaneously dehydrates to form 6,8-dimethyl-6,7-didehydroergoline. EasG then catalyzes the reduction of 6,8-dimethyl-6,7-didehydroergoline to form festuclavine. Hydrolysis of festuclavine by easM then leads to the formation of fumigaclavine B which is in turn acetylated by easN to fumigaclavine A. Finally, easL catalyzes the conversion of fumigaclavine A into fumigaclavine C by attaching a dimethylallyl moiety to C-2 of the indole nucleus. This Aspergillus fumigatus (strain ATCC MYA-4609 / CBS 101355 / FGSC A1100 / Af293) (Neosartorya fumigata) protein is 4-dimethylallyltryptophan N-methyltransferase easF.